Reading from the N-terminus, the 192-residue chain is UPF0149 protein Spro_3920 (192 aa).

The protein belongs to the UPF0149 family.

In Serratia proteamaculans (strain 568), this protein is UPF0149 protein Spro_3920.